The chain runs to 797 residues: Calcium-transporting ATPase CtpE (797 aa).

3 helical membrane passes run 55-75 (LLLI…LLII), 215-235 (ILQF…YTQL), and 254-274 (VPMV…VGVV). D301 functions as the 4-aspartylphosphate intermediate in the catalytic mechanism. Mg(2+)-binding residues include D301, T303, and D536. Transmembrane regions (helical) follow at residues 601–621 (TVYS…AIPL), 633–653 (IHVT…LSLA), 667–687 (VMTS…VTYL), 703–723 (ASTA…AVIA), 729–749 (WRLA…SLPL), and 764–784 (TSIA…MWWI).

The protein belongs to the cation transport ATPase (P-type) (TC 3.A.3) family.

Its subcellular location is the cell membrane. The enzyme catalyses Ca(2+)(in) + ATP + H2O = Ca(2+)(out) + ADP + phosphate + H(+). In terms of biological role, P-type ATPase involved in specific uptake of calcium. The protein is Calcium-transporting ATPase CtpE (ctpE) of Mycobacterium tuberculosis (strain CDC 1551 / Oshkosh).